The sequence spans 510 residues: Kynurenine 3-monooxygenase (510 aa).

The protein belongs to the aromatic-ring hydroxylase family. KMO subfamily. It depends on FAD as a cofactor.

Its subcellular location is the mitochondrion outer membrane. The enzyme catalyses L-kynurenine + NADPH + O2 + H(+) = 3-hydroxy-L-kynurenine + NADP(+) + H2O. Its pathway is cofactor biosynthesis; NAD(+) biosynthesis; quinolinate from L-kynurenine: step 1/3. Functionally, catalyzes the hydroxylation of L-kynurenine (L-Kyn) to form 3-hydroxy-L-kynurenine (L-3OHKyn). Required for synthesis of quinolinic acid. This Aspergillus oryzae (strain ATCC 42149 / RIB 40) (Yellow koji mold) protein is Kynurenine 3-monooxygenase (bna4).